A 323-amino-acid polypeptide reads, in one-letter code: Transposase for insertion sequence element IS6120 (323 aa).

Residues 300 to 323 form a disordered region; sequence ERPTDITPPTSPSDGGQHAGTEVA. Over residues 304–313 the composition is skewed to low complexity; that stretch reads DITPPTSPSD.

It belongs to the transposase mutator family.

In terms of biological role, required for the transposition of the insertion element. This chain is Transposase for insertion sequence element IS6120, found in Mycolicibacterium smegmatis (Mycobacterium smegmatis).